A 373-amino-acid chain; its full sequence is Chaperone protein DnaJ (373 aa).

The J domain occupies 5-70 (DYYEVLGLQK…EKKSNYDQFG (66 aa)). The segment at 132–214 (GVEKEITVNR…CRGNGNVRKT (83 aa)) adopts a CR-type zinc-finger fold. Residues Cys-145, Cys-148, Cys-162, Cys-165, Cys-188, Cys-191, Cys-202, and Cys-205 each coordinate Zn(2+). CXXCXGXG motif repeat units follow at residues 145–152 (CEHCNGSG), 162–169 (CPTCSGTG), 188–195 (CDRCSGTG), and 202–209 (CTHCRGNG).

This sequence belongs to the DnaJ family. As to quaternary structure, homodimer. Zn(2+) serves as cofactor.

The protein resides in the cytoplasm. Its function is as follows. Participates actively in the response to hyperosmotic and heat shock by preventing the aggregation of stress-denatured proteins and by disaggregating proteins, also in an autonomous, DnaK-independent fashion. Unfolded proteins bind initially to DnaJ; upon interaction with the DnaJ-bound protein, DnaK hydrolyzes its bound ATP, resulting in the formation of a stable complex. GrpE releases ADP from DnaK; ATP binding to DnaK triggers the release of the substrate protein, thus completing the reaction cycle. Several rounds of ATP-dependent interactions between DnaJ, DnaK and GrpE are required for fully efficient folding. Also involved, together with DnaK and GrpE, in the DNA replication of plasmids through activation of initiation proteins. The protein is Chaperone protein DnaJ of Clostridium botulinum (strain Eklund 17B / Type B).